The sequence spans 359 residues: Peptide chain release factor 1 (359 aa).

Q233 carries the post-translational modification N5-methylglutamine.

This sequence belongs to the prokaryotic/mitochondrial release factor family. Methylated by PrmC. Methylation increases the termination efficiency of RF1.

The protein localises to the cytoplasm. Functionally, peptide chain release factor 1 directs the termination of translation in response to the peptide chain termination codons UAG and UAA. The chain is Peptide chain release factor 1 from Ruminiclostridium cellulolyticum (strain ATCC 35319 / DSM 5812 / JCM 6584 / H10) (Clostridium cellulolyticum).